The chain runs to 137 residues: Crustacean calcium-binding protein 23 (137 aa).

EF-hand domains lie at arginine 27 to aspartate 48, glutamate 62 to lysine 97, and alanine 100 to leucine 135.

In terms of assembly, monomer or disulfide-linked dimers.

Its function is as follows. Possibly acts as a regulatory protein and not as a calcium buffer or transport protein. This Homarus americanus (American lobster) protein is Crustacean calcium-binding protein 23.